Reading from the N-terminus, the 158-residue chain is Crossover junction endodeoxyribonuclease RuvC (158 aa).

Catalysis depends on residues Asp7, Glu66, and Asp139. The Mg(2+) site is built by Asp7, Glu66, and Asp139.

This sequence belongs to the RuvC family. As to quaternary structure, homodimer which binds Holliday junction (HJ) DNA. The HJ becomes 2-fold symmetrical on binding to RuvC with unstacked arms; it has a different conformation from HJ DNA in complex with RuvA. In the full resolvosome a probable DNA-RuvA(4)-RuvB(12)-RuvC(2) complex forms which resolves the HJ. It depends on Mg(2+) as a cofactor.

The protein localises to the cytoplasm. It catalyses the reaction Endonucleolytic cleavage at a junction such as a reciprocal single-stranded crossover between two homologous DNA duplexes (Holliday junction).. Functionally, the RuvA-RuvB-RuvC complex processes Holliday junction (HJ) DNA during genetic recombination and DNA repair. Endonuclease that resolves HJ intermediates. Cleaves cruciform DNA by making single-stranded nicks across the HJ at symmetrical positions within the homologous arms, yielding a 5'-phosphate and a 3'-hydroxyl group; requires a central core of homology in the junction. The consensus cleavage sequence is 5'-(A/T)TT(C/G)-3'. Cleavage occurs on the 3'-side of the TT dinucleotide at the point of strand exchange. HJ branch migration catalyzed by RuvA-RuvB allows RuvC to scan DNA until it finds its consensus sequence, where it cleaves and resolves the cruciform DNA. The polypeptide is Crossover junction endodeoxyribonuclease RuvC (Nitratiruptor sp. (strain SB155-2)).